Reading from the N-terminus, the 571-residue chain is Proline--tRNA ligase (571 aa).

This sequence belongs to the class-II aminoacyl-tRNA synthetase family. ProS type 1 subfamily. As to quaternary structure, homodimer.

The protein resides in the cytoplasm. The catalysed reaction is tRNA(Pro) + L-proline + ATP = L-prolyl-tRNA(Pro) + AMP + diphosphate. Functionally, catalyzes the attachment of proline to tRNA(Pro) in a two-step reaction: proline is first activated by ATP to form Pro-AMP and then transferred to the acceptor end of tRNA(Pro). As ProRS can inadvertently accommodate and process non-cognate amino acids such as alanine and cysteine, to avoid such errors it has two additional distinct editing activities against alanine. One activity is designated as 'pretransfer' editing and involves the tRNA(Pro)-independent hydrolysis of activated Ala-AMP. The other activity is designated 'posttransfer' editing and involves deacylation of mischarged Ala-tRNA(Pro). The misacylated Cys-tRNA(Pro) is not edited by ProRS. The chain is Proline--tRNA ligase from Vibrio vulnificus (strain CMCP6).